Here is a 77-residue protein sequence, read N- to C-terminus: Translation initiation factor IF-1, chloroplastic (77 aa).

Residues 1–71 (MKEQKLIHEG…TRGRIIYRLR (71 aa)) form the S1-like domain.

This sequence belongs to the IF-1 family. In terms of assembly, component of the 30S ribosomal translation pre-initiation complex which assembles on the 30S ribosome in the order IF-2 and IF-3, IF-1 and N-formylmethionyl-tRNA(fMet); mRNA recruitment can occur at any time during PIC assembly.

Its subcellular location is the plastid. It localises to the chloroplast. In terms of biological role, one of the essential components for the initiation of protein synthesis. Stabilizes the binding of IF-2 and IF-3 on the 30S subunit to which N-formylmethionyl-tRNA(fMet) subsequently binds. Helps modulate mRNA selection, yielding the 30S pre-initiation complex (PIC). Upon addition of the 50S ribosomal subunit IF-1, IF-2 and IF-3 are released leaving the mature 70S translation initiation complex. The protein is Translation initiation factor IF-1, chloroplastic of Asarum canadense (Wild ginger).